The primary structure comprises 142 residues: 3-hydroxyacyl-[acyl-carrier-protein] dehydratase FabZ (142 aa).

His-48 is a catalytic residue.

The protein belongs to the thioester dehydratase family. FabZ subfamily.

The protein localises to the cytoplasm. The enzyme catalyses a (3R)-hydroxyacyl-[ACP] = a (2E)-enoyl-[ACP] + H2O. Its function is as follows. Involved in unsaturated fatty acids biosynthesis. Catalyzes the dehydration of short chain beta-hydroxyacyl-ACPs and long chain saturated and unsaturated beta-hydroxyacyl-ACPs. The sequence is that of 3-hydroxyacyl-[acyl-carrier-protein] dehydratase FabZ from Natranaerobius thermophilus (strain ATCC BAA-1301 / DSM 18059 / JW/NM-WN-LF).